Consider the following 635-residue polypeptide: Chaperone protein HtpG (635 aa).

Positions 1–336 (MTTAEAAAPE…SADLPLNLSR (336 aa)) are a; substrate-binding. The b stretch occupies residues 337 to 556 (EMLQDSAILA…ESGIDRRLEK (220 aa)). The c stretch occupies residues 557–635 (LLASAGRLGD…RVMQRGLPTA (79 aa)).

Belongs to the heat shock protein 90 family. Homodimer.

The protein resides in the cytoplasm. Molecular chaperone. Has ATPase activity. This chain is Chaperone protein HtpG, found in Azorhizobium caulinodans (strain ATCC 43989 / DSM 5975 / JCM 20966 / LMG 6465 / NBRC 14845 / NCIMB 13405 / ORS 571).